We begin with the raw amino-acid sequence, 144 residues long: uncharacterized protein (144 aa).

In terms of domain architecture, HTH lysR-type spans 1 to 58 (MDLASLNAFIAVAETGSFSEAGERLHLTQPAVSKRIAALEQQLQVRLFDRLGREVRLT). Residues 18–38 (FSEAGERLHLTQPAVSKRIAA) constitute a DNA-binding region (H-T-H motif).

This sequence belongs to the LysR transcriptional regulatory family.

This is an uncharacterized protein from Azotobacter vinelandii.